The primary structure comprises 344 residues: MSNAITMGIFWHLIGAASAACFYAPFKKVKKWSWETMWSVGGIVSWIILPWAISALLLPNFWAYYSSFSLSTRLPVFLFGAMWGIGNINYGLTMRYLGMSMGIGIAIGITLIVGTLMTPIINGNFDVLISTEGGRMTLLGVLVALIGVGIVTRAGQLKERKMGIKAEEFNLKKGLVLAVMCGIFSAGMSFAMNAAKPMHEAAAALGVDPLYVALPSYVVIMGGGAIINLGFCFIRLAKVKDLSLKADFSLAKSLIIHNVLLSTLGGLMWYLQFFFYAWGHARIPAQYDYISWMLHMSFYVLCGGIVGLVLKEWNNAGRRPVTVLSLGCVVIIVAANIVGIGMAN.

10 consecutive transmembrane segments (helical) span residues 4-24 (AITMGIFWHLIGAASAACFYA), 38-58 (WSVGGIVSWIILPWAISALLL), 74-94 (LPVFLFGAMWGIGNINYGLTM), 101-121 (MGIGIAIGITLIVGTLMTPII), 137-157 (TLLGVLVALIGVGIVTRAGQL), 175-195 (LVLAVMCGIFSAGMSFAMNAA), 214-234 (LPSYVVIMGGGAIINLGFCFI), 259-279 (VLLSTLGGLMWYLQFFFYAWG), 290-310 (ISWMLHMSFYVLCGGIVGLVL), and 323-343 (VLSLGCVVIIVAANIVGIGMA).

The protein belongs to the L-rhamnose transporter (TC 2.A.7.6) family.

It localises to the cell inner membrane. The catalysed reaction is L-rhamnopyranose(in) + H(+)(in) = L-rhamnopyranose(out) + H(+)(out). Its function is as follows. Uptake of L-rhamnose across the cytoplasmic membrane with the concomitant transport of protons into the cell (symport system). The sequence is that of L-rhamnose-proton symporter from Escherichia coli (strain K12 / MC4100 / BW2952).